The chain runs to 122 residues: Large ribosomal subunit protein uL14 (122 aa).

It belongs to the universal ribosomal protein uL14 family. In terms of assembly, part of the 50S ribosomal subunit. Forms a cluster with proteins L3 and L19. In the 70S ribosome, L14 and L19 interact and together make contacts with the 16S rRNA in bridges B5 and B8.

Its function is as follows. Binds to 23S rRNA. Forms part of two intersubunit bridges in the 70S ribosome. The sequence is that of Large ribosomal subunit protein uL14 from Polynucleobacter necessarius subsp. necessarius (strain STIR1).